Consider the following 1231-residue polypeptide: S-layer protein A (1231 aa).

An N-terminal signal peptide occupies residues 1-35 (MNKTLGLILTSVFLLSTLGIITGFVIPTQAANSND).

This sequence belongs to the Sulfolobales SlaA family. In terms of assembly, the mushroom-shaped unit cells of the Sulfolobales' S-layers may consist of three SlaB subunits and six SlaA subunits.

The protein localises to the secreted. The protein resides in the cell wall. It is found in the S-layer. Functionally, S-layer large protein. May form the highly ordered outer sheath. The protein is S-layer protein A of Saccharolobus solfataricus (strain ATCC 35092 / DSM 1617 / JCM 11322 / P2) (Sulfolobus solfataricus).